Consider the following 160-residue polypeptide: 3-hydroxyacyl-[acyl-carrier-protein] dehydratase FabZ (160 aa).

His63 is a catalytic residue.

It belongs to the thioester dehydratase family. FabZ subfamily.

It is found in the cytoplasm. The catalysed reaction is a (3R)-hydroxyacyl-[ACP] = a (2E)-enoyl-[ACP] + H2O. In terms of biological role, involved in unsaturated fatty acids biosynthesis. Catalyzes the dehydration of short chain beta-hydroxyacyl-ACPs and long chain saturated and unsaturated beta-hydroxyacyl-ACPs. The sequence is that of 3-hydroxyacyl-[acyl-carrier-protein] dehydratase FabZ from Xylella fastidiosa (strain 9a5c).